We begin with the raw amino-acid sequence, 843 residues long: Neuroligin-1 (843 aa).

A signal peptide spans 1-45 (MALPRCMWPNYVWRAMMACVVHRGSGAPLTLCLLGCLLQTFHVLS). The Extracellular segment spans residues 46 to 697 (QKLDDVDPLV…DQRDYSTELS (652 aa)). N-linked (GlcNAc...) (complex) asparagine glycosylation is present at Asn-109. Cystine bridges form between Cys-117-Cys-153 and Cys-172-Cys-181. Asn-303 and Asn-343 each carry an N-linked (GlcNAc...) (complex) asparagine glycan. 2 disulfide bridges follow: Cys-342–Cys-353 and Cys-512–Cys-546. Asn-547 carries an N-linked (GlcNAc...) asparagine glycan. Residues 647 to 688 (TKVPSTDITLRPTRKNSTPVTSAFPTAKQDDPKQQPSPFSVD) form a disordered region. Residues 661–670 (KNSTPVTSAF) are compositionally biased toward polar residues. Residues Ser-683 and Ser-686 are each glycosylated (O-linked (GalNAc...) serine). The helical transmembrane segment at 698 to 718 (VTIAVGASLLFLNILAFAALY) threads the bilayer. Over 719–843 (YKKDKRRHDV…HPHSHSTTRV (125 aa)) the chain is Cytoplasmic. The disordered stretch occupies residues 822–843 (GGQNNTLPHPHPHPHSHSTTRV). The segment covering 831-843 (PHPHPHSHSTTRV) has biased composition (basic residues).

It belongs to the type-B carboxylesterase/lipase family. In terms of assembly, interacts with neurexins NRXN1, NRXN2 and NRXN3. Interaction with neurexins is mediated by heparan sulfate glycan modification on neurexin. Interacts with NLGN3. Interacts (via its C-terminus) with DLG4/PSD-95 (via PDZ domain 3). Interacts with GOPC. Interacts with AIP1 and PDZRN3. Post-translationally, the N-terminus is blocked. Expressed in brain, almost exclusively in neurons, and spinal cord. Detected in pancreas islet beta cells.

The protein localises to the cell membrane. Its subcellular location is the postsynaptic density. It localises to the synaptic cleft. It is found in the synaptic cell membrane. Its function is as follows. Cell surface protein involved in cell-cell-interactions via its interactions with neurexin family members. Plays a role in synapse function and synaptic signal transmission, and probably mediates its effects by recruiting and clustering other synaptic proteins. May promote the initial formation of synapses, but is not essential for this. In vitro, triggers the de novo formation of presynaptic structures. May be involved in specification of excitatory synapses. Required to maintain wakefulness quality and normal synchrony of cerebral cortex activity during wakefulness and sleep. The protein is involved in nervous system development. The sequence is that of Neuroligin-1 (Nlgn1) from Rattus norvegicus (Rat).